We begin with the raw amino-acid sequence, 339 residues long: Uracil nucleotide/cysteinyl leukotriene receptor (339 aa).

At 1 to 36 (MNGLEAALPSLTDNSSLAYSEQCGQETPLENMLFAC) the chain is on the extracellular side. Asn-14 carries N-linked (GlcNAc...) asparagine glycosylation. Residues 37–57 (FYLLDFILAFVGNALALWLFI) form a helical membrane-spanning segment. Over 58–64 (WDHKSGT) the chain is Cytoplasmic. A helical membrane pass occupies residues 65–85 (PANVFLMHLAVADLSCVLVLP). Topologically, residues 86–105 (TRLVYHFSGNHWPFGEIPCR) are extracellular. Cys-104 and Cys-181 form a disulfide bridge. The helical transmembrane segment at 106 to 126 (LTGFLFYLNMYASIYFLTCIS) threads the bilayer. Topologically, residues 127–147 (ADRFLAIVHPVKSLKLRRPLY) are cytoplasmic. A helical membrane pass occupies residues 148–168 (AHLACAFLWIVVAVAMAPLLV). The Extracellular segment spans residues 169–195 (SPQTVQTNHTVVCLQLYREKASHHALA). The N-linked (GlcNAc...) asparagine glycan is linked to Asn-176. The chain crosses the membrane as a helical span at residues 196–216 (SLAVAFTFPFITTVTCYLLII). Topologically, residues 217 to 232 (RSLRQGPRIEKHLKNK) are cytoplasmic. A helical transmembrane segment spans residues 233 to 253 (AVRMIAMVLAIFLICFVPYHI). The Extracellular segment spans residues 254 to 280 (HRSVYVLHYRGGGTSCAAQRALALGNR). A helical membrane pass occupies residues 281-301 (ITSCLTSLNGALDPVMYFFVA). Topologically, residues 302–339 (EKFRHALCNLLCSKRLTGPPPSFEGKTNESSLSARSEL) are cytoplasmic.

This sequence belongs to the G-protein coupled receptor 1 family.

Its subcellular location is the cell membrane. Its function is as follows. Dual specificity receptor for uracil nucleotides and cysteinyl leukotrienes (CysLTs). Signals through G(i) and inhibition of adenylyl cyclase. May mediate brain damage by nucleotides and CysLTs following ischemia. In Mus musculus (Mouse), this protein is Uracil nucleotide/cysteinyl leukotriene receptor.